The primary structure comprises 320 residues: tRNA (guanosine(34)-2'-O)-methyltransferase (320 aa).

The S-adenosyl-L-methionine site is built by glycine 53, tryptophan 55, aspartate 81, aspartate 97, and aspartate 122. Lysine 162 functions as the Proton acceptor in the catalytic mechanism.

It belongs to the class I-like SAM-binding methyltransferase superfamily. RNA methyltransferase RlmE family. TRM7 subfamily. As to quaternary structure, interacts with CG33172/WDR6.

The protein localises to the cytoplasm. The catalysed reaction is cytidine(32)/guanosine(34) in tRNA + 2 S-adenosyl-L-methionine = 2'-O-methylcytidine(32)/2'-O-methylguanosine(34) in tRNA + 2 S-adenosyl-L-homocysteine + 2 H(+). In terms of biological role, methylates the 2'-O-ribose of nucleotides at position 34 of the tRNA anticodon loop of substrate tRNAs. May require WDR6 for methylation of the nucleotide at position 34 of the anticodon loop of substrate tRNAs. Plays a role in neurogenesis. Requisite for RNA-mediated gene silencing. Modifies position 34 in tRNA(Leu(CAA)), tRNA(Leu(CAG)), tRNA(Phe(GAA)), and tRNA(Trp(CCA)). The sequence is that of tRNA (guanosine(34)-2'-O)-methyltransferase from Drosophila melanogaster (Fruit fly).